Consider the following 2109-residue polypeptide: Nonribosomal peptide synthetase sidE (2109 aa).

The segment at 31-512 (LTPPSPPCLV…QNGKVDFRAI (482 aa)) is adenylation 1. A Carrier 1 domain is found at 537–613 (AGLSETASKI…EIADTVQLDS (77 aa)). S574 carries the O-(pantetheine 4'-phosphoryl)serine modification. The segment at 646–908 (DAYPVTALQE…LAVVPYAIAI (263 aa)) is condensation 1. The interval 1058 to 1555 (RTLNGQFEAT…GKANRKQLKA (498 aa)) is adenylation 2. Positions 1584 to 1660 (PLASETQKVL…AMADQLKGES (77 aa)) constitute a Carrier 2 domain. At S1621 the chain carries O-(pantetheine 4'-phosphoryl)serine. The interval 1695–1968 (YPCPPGQAEF…NFLPMRSKVD (274 aa)) is condensation 2.

Belongs to the NRP synthetase family.

The protein operates within siderophore biosynthesis. In terms of biological role, nonribosomal peptide synthetase; part of the siderophore biosynthetic pathway. Aspergillus fumigatus produces four types of siderophores, low-molecular-mass iron chelators, including excreted fusarinine C (FsC) and triacetylfusarinine C (TAFC) for iron uptake and intacellular ferricrocin (FC) for hyphal and hydroxyferricrocin (HFC) for conidial iron distribution and storage. TAFC consists of three N(2)-acetyl-N(5)-anhydromevalonyl-N(5)-hydroxyornithine residues cyclically linked by ester bonds; FC is a cyclic hexapeptide with the structure Gly-Ser-Gly-(N(5)-acetyl-N(5)-hydroxyornithine)x3. The biosynthesis of all four siderophores depends on the hydroxylation of ornithine, catalyzed by the monooxygenase sidA. Subsequently, the pathways for biosynthesis of extra- and intracellular siderophores split. For biosynthesis of extracellular siderophores, the transacylase sidF transfers anhydromevalonyl to N(5)-hydroxyornithine. The required anhydromevalonyl-CoA moiety is derived from mevalonate by CoA ligation and dehydration catalyzed by sidI and sidH respectively. The acetylation of N(5)-hydroxyornithine for FC biosynthesis involves the constitutively expressed sidL. FC is hydroxylated to HFC by an as yet uncharacterized enzyme during conidiation. Assembly of fusarinine C (FsC) and FC is catalyzed by two different nonribosomal peptide synthetases (NRPS), sidD and sidC respectively. Subsequently, sidG catalyzes N2-acetylation of FsC for forming TAFC. Both extra- and intracellular siderophores are crucial for growth during iron limitation and virulence. The chain is Nonribosomal peptide synthetase sidE from Aspergillus fumigatus (strain ATCC MYA-4609 / CBS 101355 / FGSC A1100 / Af293) (Neosartorya fumigata).